We begin with the raw amino-acid sequence, 185 residues long: Large ribosomal subunit protein bL25 (185 aa).

Belongs to the bacterial ribosomal protein bL25 family. CTC subfamily. In terms of assembly, part of the 50S ribosomal subunit; part of the 5S rRNA/L5/L18/L25 subcomplex. Contacts the 5S rRNA. Binds to the 5S rRNA independently of L5 and L18.

In terms of biological role, this is one of the proteins that binds to the 5S RNA in the ribosome where it forms part of the central protuberance. This Chlamydia trachomatis serovar D (strain ATCC VR-885 / DSM 19411 / UW-3/Cx) protein is Large ribosomal subunit protein bL25.